A 162-amino-acid chain; its full sequence is Putative pre-16S rRNA nuclease (162 aa).

This sequence belongs to the YqgF nuclease family.

It is found in the cytoplasm. Could be a nuclease involved in processing of the 5'-end of pre-16S rRNA. The protein is Putative pre-16S rRNA nuclease of Brucella melitensis biotype 2 (strain ATCC 23457).